The primary structure comprises 324 residues: Viral cathepsin (324 aa).

A signal peptide spans 1–18; sequence MNKIVLYLLIYVGTFSAA. Residues 19-113 constitute a propeptide, activation peptide; the sequence is YDLLKAPSYF…VVLNRPPDKG (95 aa). 3 disulfide bridges follow: cysteine 134–cysteine 175, cysteine 168–cysteine 208, and cysteine 263–cysteine 311. Cysteine 137 is an active-site residue. Asparagine 159 carries an N-linked (GlcNAc...) asparagine; by host glycan. Active-site residues include histidine 270 and asparagine 290.

Belongs to the peptidase C1 family. In terms of processing, synthesized as an inactive proenzyme and activated by proteolytic removal of the inhibitory propeptide.

It carries out the reaction Endopeptidase of broad specificity, hydrolyzing substrates of both cathepsin L and cathepsin B.. Its function is as follows. Cysteine protease that plays an essential role in host liquefaction to facilitate horizontal transmission of the virus. May participate in the degradation of foreign protein expressed by the baculovirus system. The sequence is that of Viral cathepsin (Vcath) from Choristoneura fumiferana defective polyhedrosis virus (Cfdef).